We begin with the raw amino-acid sequence, 493 residues long: Transcript termination protein A18 (493 aa).

The region spanning 100–256 (MIELKRPLYI…NSIINIAKLS (157 aa)) is the Helicase ATP-binding domain. ATP is bound at residue 113–120 (LACGFGKT). The DESH box motif lies at 206 to 209 (DESH). The Helicase C-terminal domain maps to 309–456 (ILDTLVEEFK…IISLSVDKLG (148 aa)).

The protein belongs to the helicase family. Poxviruses subfamily. As to quaternary structure, interacts with G2. Might be part of a transcription complex composed at least of G2, A18, and H5.

It localises to the virion. Functionally, DNA helicase which seems to act as a postreplicative transcription termination factor. Involved in ATP-dependent release of nascent RNA. Forms a stable complex with single-stranded DNA, and to a lesser extent RNA. This is Transcript termination protein A18 from Mus musculus (Mouse).